Consider the following 155-residue polypeptide: Interleukin-2 (155 aa).

An N-terminal signal peptide occupies residues 1–20 (MYKIQLLSCIALTLALVANG). An O-linked (GalNAc...) threonine glycan is attached at Thr-23. Cys-79 and Cys-127 are joined by a disulfide.

It belongs to the IL-2 family.

Its subcellular location is the secreted. Functionally, cytokine produced by activated CD4-positive helper T-cells and to a lesser extend activated CD8-positive T-cells and natural killer (NK) cells that plays pivotal roles in the immune response and tolerance. Binds to a receptor complex composed of either the high-affinity trimeric IL-2R (IL2RA/CD25, IL2RB/CD122 and IL2RG/CD132) or the low-affinity dimeric IL-2R (IL2RB and IL2RG). Interaction with the receptor leads to oligomerization and conformation changes in the IL-2R subunits resulting in downstream signaling starting with phosphorylation of JAK1 and JAK3. In turn, JAK1 and JAK3 phosphorylate the receptor to form a docking site leading to the phosphorylation of several substrates including STAT5. This process leads to activation of several pathways including STAT, phosphoinositide-3-kinase/PI3K and mitogen-activated protein kinase/MAPK pathways. Functions as a T-cell growth factor and can increase NK-cell cytolytic activity as well. Promotes strong proliferation of activated B-cells and subsequently immunoglobulin production. Plays a pivotal role in regulating the adaptive immune system by controlling the survival and proliferation of regulatory T-cells, which are required for the maintenance of immune tolerance. Moreover, participates in the differentiation and homeostasis of effector T-cell subsets, including Th1, Th2, Th17 as well as memory CD8-positive T-cells. In Bubalus bubalis (Domestic water buffalo), this protein is Interleukin-2 (IL2).